Reading from the N-terminus, the 198-residue chain is Large ribosomal subunit protein uL24c (198 aa).

Residues 1–50 (MATMSALQSSFTSLSLSPSSSFLGQRLISPISLSVTSPVKPAENPCLVLA) constitute a chloroplast transit peptide.

Belongs to the universal ribosomal protein uL24 family. In terms of assembly, part of the 50S ribosomal subunit.

It is found in the plastid. Its subcellular location is the chloroplast. Functionally, one of two assembly initiator proteins, it binds directly to the 5'-end of the 23S rRNA, where it nucleates assembly of the 50S subunit. Required for optimal plastid performance in terms of photosynthesis and growth. Required for the translation of plastid mRNAs. Plays a critical role in biosynthesis of thylakoid membrane proteins encoded by chloroplast genes. In Arabidopsis thaliana (Mouse-ear cress), this protein is Large ribosomal subunit protein uL24c (RPL24).